Reading from the N-terminus, the 343-residue chain is Ornithine carbamoyltransferase (343 aa).

Residues 62–65 (STRT), Gln-89, Arg-113, and 140–143 (HPTQ) each bind carbamoyl phosphate. L-ornithine contacts are provided by residues Asn-172, Asp-236, and 240–241 (SM). Carbamoyl phosphate-binding positions include 278–279 (CL) and Arg-323.

This sequence belongs to the aspartate/ornithine carbamoyltransferase superfamily. OTCase family.

The protein resides in the cytoplasm. It catalyses the reaction carbamoyl phosphate + L-ornithine = L-citrulline + phosphate + H(+). The protein operates within amino-acid degradation; L-arginine degradation via ADI pathway; carbamoyl phosphate from L-arginine: step 2/2. Reversibly catalyzes the transfer of the carbamoyl group from carbamoyl phosphate (CP) to the N(epsilon) atom of ornithine (ORN) to produce L-citrulline. The polypeptide is Ornithine carbamoyltransferase (Levilactobacillus brevis (strain ATCC 367 / BCRC 12310 / CIP 105137 / JCM 1170 / LMG 11437 / NCIMB 947 / NCTC 947) (Lactobacillus brevis)).